Here is a 334-residue protein sequence, read N- to C-terminus: MASVMQKLITPLASGPAEPPRNKVTIVGVGQVGMACAVSVLLRELADELALVDVVEDRLKGEMLDLQHGSLFLKTPKIVADKDYSVTANSRIVVVTAGVRQQEGESRLNLVQRNVNIFKHIIPQIVKYSPDCILVVVSNPVDVLTYVTWKLSGLPKHRVIGSGTNLDSARFRYIMAEKLGIHASSFNGYILGEHGDTSVPVWSGANVAGVSLQKLNPDIGTDKDAENWKEAHKMVVDSAYEVIKLKGYTNWAIGLSVADLTETLVKNLNRVHPVSTMVKGMYGINEEVYLSLPCVLNSSGVGSVINMTLTDGEIGQLKSSADTLWGIQKDLKDL.

NAD(+) contacts are provided by residues 30–58 and Arg-100; that span reads GQVG…VEDR. Positions 107, 139, and 170 each coordinate substrate. Asn-139 serves as a coordination point for NAD(+). The active-site Proton acceptor is His-194. Residue Thr-249 participates in substrate binding.

The protein belongs to the LDH/MDH superfamily. LDH family. As to quaternary structure, homotetramer.

Its subcellular location is the cytoplasm. It catalyses the reaction (S)-lactate + NAD(+) = pyruvate + NADH + H(+). It functions in the pathway fermentation; pyruvate fermentation to lactate; (S)-lactate from pyruvate: step 1/1. This Danio rerio (Zebrafish) protein is L-lactate dehydrogenase B-A chain (ldhba).